Consider the following 222-residue polypeptide: Peptide methionine sulfoxide reductase MsrA (222 aa).

C60 is an active-site residue.

The protein belongs to the MsrA Met sulfoxide reductase family.

It catalyses the reaction L-methionyl-[protein] + [thioredoxin]-disulfide + H2O = L-methionyl-(S)-S-oxide-[protein] + [thioredoxin]-dithiol. It carries out the reaction [thioredoxin]-disulfide + L-methionine + H2O = L-methionine (S)-S-oxide + [thioredoxin]-dithiol. Has an important function as a repair enzyme for proteins that have been inactivated by oxidation. Catalyzes the reversible oxidation-reduction of methionine sulfoxide in proteins to methionine. The polypeptide is Peptide methionine sulfoxide reductase MsrA (Pseudomonas putida (strain W619)).